The sequence spans 268 residues: WUSCHEL-related homeobox 11 (268 aa).

The disordered stretch occupies residues 1-35 (MDQEQTPHSPTRHSRSPPSSASGSTSAEPVRSRWS). Low complexity predominate over residues 16 to 27 (SPPSSASGSTSA). Residues 29–93 (PVRSRWSPKP…NRRSRSRRRQ (65 aa)) constitute a DNA-binding region (homeobox; WUS-type).

It belongs to the WUS homeobox family.

Its subcellular location is the nucleus. Its function is as follows. Transcription factor which may be involved in developmental processes. This is WUSCHEL-related homeobox 11 (WOX11) from Arabidopsis thaliana (Mouse-ear cress).